Consider the following 309-residue polypeptide: MEFHFFGTGSGVPSIERNVSACAVRFLQQRGKQWLFDCGEATQHQILRSSIALGKIERIFITHLHGDHIFGLPGLLGSRSFQGGENPLFLYGPKGIRSFVETALQVSNTHVKYELTIEEFSEPGLLFHEEGFKVETILLDHVMPCYAFKVTEDDRPGELLVDRLKAKGVPPGPLYRKIQQGETVELPTGERLEANAFLGPPKRGRSFVLAGDTRPVKELIPFAKNVNVLIHEATFLDDKKGHAHEYGHSTMADAIQLAKQANVDHLILTHISSRYHDMSDELQKKAQNAFANAVVAHDFYVFHLPLAKG.

Positions 63, 65, 67, 68, 141, 212, and 270 each coordinate Zn(2+). The active-site Proton acceptor is the aspartate 67.

Belongs to the RNase Z family. In terms of assembly, homodimer. It depends on Zn(2+) as a cofactor.

It carries out the reaction Endonucleolytic cleavage of RNA, removing extra 3' nucleotides from tRNA precursor, generating 3' termini of tRNAs. A 3'-hydroxy group is left at the tRNA terminus and a 5'-phosphoryl group is left at the trailer molecule.. Zinc phosphodiesterase, which displays some tRNA 3'-processing endonuclease activity. Probably involved in tRNA maturation, by removing a 3'-trailer from precursor tRNA. This Halalkalibacterium halodurans (strain ATCC BAA-125 / DSM 18197 / FERM 7344 / JCM 9153 / C-125) (Bacillus halodurans) protein is Ribonuclease Z.